A 210-amino-acid chain; its full sequence is ATP phosphoribosyltransferase (210 aa).

This sequence belongs to the ATP phosphoribosyltransferase family. Short subfamily. Heteromultimer composed of HisG and HisZ subunits.

It localises to the cytoplasm. The catalysed reaction is 1-(5-phospho-beta-D-ribosyl)-ATP + diphosphate = 5-phospho-alpha-D-ribose 1-diphosphate + ATP. Its pathway is amino-acid biosynthesis; L-histidine biosynthesis; L-histidine from 5-phospho-alpha-D-ribose 1-diphosphate: step 1/9. Functionally, catalyzes the condensation of ATP and 5-phosphoribose 1-diphosphate to form N'-(5'-phosphoribosyl)-ATP (PR-ATP). Has a crucial role in the pathway because the rate of histidine biosynthesis seems to be controlled primarily by regulation of HisG enzymatic activity. In Petrotoga mobilis (strain DSM 10674 / SJ95), this protein is ATP phosphoribosyltransferase.